A 295-amino-acid polypeptide reads, in one-letter code: Nucleotide-binding protein BH3569 (295 aa).

14-21 (GMSGAGKT) provides a ligand contact to ATP. 65 to 68 (DLRG) serves as a coordination point for GTP.

The protein belongs to the RapZ-like family.

In terms of biological role, displays ATPase and GTPase activities. This Halalkalibacterium halodurans (strain ATCC BAA-125 / DSM 18197 / FERM 7344 / JCM 9153 / C-125) (Bacillus halodurans) protein is Nucleotide-binding protein BH3569.